The sequence spans 39 residues: Large ribosomal subunit protein bL36 (39 aa).

It belongs to the bacterial ribosomal protein bL36 family.

This chain is Large ribosomal subunit protein bL36, found in Limosilactobacillus reuteri (strain DSM 20016) (Lactobacillus reuteri).